The following is a 185-amino-acid chain: Small ribosomal subunit protein uS7 (185 aa).

The protein belongs to the universal ribosomal protein uS7 family. Part of the 30S ribosomal subunit.

One of the primary rRNA binding proteins, it binds directly to 16S rRNA where it nucleates assembly of the head domain of the 30S subunit. Is located at the subunit interface close to the decoding center. This chain is Small ribosomal subunit protein uS7, found in Methanosarcina barkeri (strain Fusaro / DSM 804).